Reading from the N-terminus, the 378-residue chain is tRNA N(3)-cytidine methyltransferase METTL2 (378 aa).

S-adenosyl-L-methionine-binding residues include Trp78, Tyr82, Gly188, Asp213, Asp239, Leu240, and Ile260.

It belongs to the methyltransferase superfamily. METL family. Monomer. Interacts with DALRD3.

Its subcellular location is the cytoplasm. It carries out the reaction cytidine(32) in tRNA(Thr) + S-adenosyl-L-methionine = N(3)-methylcytidine(32) in tRNA(Thr) + S-adenosyl-L-homocysteine + H(+). It catalyses the reaction cytidine(32) in tRNA(Arg)(CCU) + S-adenosyl-L-methionine = N(3)-methylcytidine(32) in tRNA(Arg)(CCU) + S-adenosyl-L-homocysteine + H(+). In terms of biological role, S-adenosyl-L-methionine-dependent methyltransferase that mediates N(3)-methylcytidine modification of residue 32 of the tRNA anticodon loop of tRNA(Thr)(UGU) and tRNA(Arg)(CCU). N(3)-methylcytidine methylation by METTL2 requires the N6-threonylcarbamoylation of tRNA (t6A37) by the EKC/KEOPS complex as prerequisite. The sequence is that of tRNA N(3)-cytidine methyltransferase METTL2 (METTL2) from Bos taurus (Bovine).